The sequence spans 819 residues: DNA replication licensing factor Mcm3 (819 aa).

The MCM domain maps to 290 to 496 (IFELLSKSLA…DVDQMISDHV (207 aa)). ADP-binding residues include Gln-348, Leu-388, Glu-389, Ala-390, and Ala-392. Residues 472-475 (SRFD) carry the Arginine finger motif. Ser-522 bears the Phosphoserine mark. Phosphotyrosine is present on Tyr-538. The interval 655–717 (DRPSKRRRNS…DAGDLTRRET (63 aa)) is disordered. A phosphoserine mark is found at Ser-664, Ser-666, Ser-680, and Ser-682. Phosphothreonine occurs at positions 690 and 692. Residues Ser-697, Ser-735, and Ser-739 each carry the phosphoserine modification.

This sequence belongs to the MCM family. In terms of assembly, component of the Mcm2-7 complex. The complex forms a toroidal hexameric ring with the proposed subunit order Mcm2-Mcm6-Mcm4-Mcm7-Mcm3-Mcm5.

The protein localises to the nucleus. Its subcellular location is the chromosome. The enzyme catalyses ATP + H2O = ADP + phosphate + H(+). Its function is as follows. Acts as a component of the Mcm2-7 complex (Mcm complex) (Mcm complex) which is the putative replicative helicase essential for 'once per cell cycle' DNA replication initiation and elongation in eukaryotic cells. Core component of CDC45-MCM-GINS (CMG) helicase, the molecular machine that unwinds template DNA during replication, and around which the replisome is built. The active ATPase sites in the Mcm2-7 ring are formed through the interaction surfaces of two neighboring subunits such that a critical structure of a conserved arginine finger motif is provided in trans relative to the ATP-binding site of the Walker A box of the adjacent subunit. The six ATPase active sites, however, are likely to contribute differentially to the complex helicase activity. The polypeptide is DNA replication licensing factor Mcm3 (Mcm3) (Drosophila melanogaster (Fruit fly)).